A 728-amino-acid chain; its full sequence is Elongation factor 2 (728 aa).

The region spanning 19 to 261 (EHIRNIAIAA…MVCEHFPNPV (243 aa)) is the tr-type G domain. GTP is bound by residues 28–35 (AHVDHGKT), 94–98 (DTPGH), and 148–151 (NKVD). Position 596 is a diphthamide (His596).

The protein belongs to the TRAFAC class translation factor GTPase superfamily. Classic translation factor GTPase family. EF-G/EF-2 subfamily.

It localises to the cytoplasm. Catalyzes the GTP-dependent ribosomal translocation step during translation elongation. During this step, the ribosome changes from the pre-translocational (PRE) to the post-translocational (POST) state as the newly formed A-site-bound peptidyl-tRNA and P-site-bound deacylated tRNA move to the P and E sites, respectively. Catalyzes the coordinated movement of the two tRNA molecules, the mRNA and conformational changes in the ribosome. The chain is Elongation factor 2 from Haloarcula marismortui (strain ATCC 43049 / DSM 3752 / JCM 8966 / VKM B-1809) (Halobacterium marismortui).